A 156-amino-acid chain; its full sequence is 6,7-dimethyl-8-ribityllumazine synthase (156 aa).

Residues phenylalanine 23, 57 to 59, and 81 to 83 contribute to the 5-amino-6-(D-ribitylamino)uracil site; these read AYE and AII. 86-87 contacts (2S)-2-hydroxy-3-oxobutyl phosphate; it reads ST. Histidine 89 serves as the catalytic Proton donor. Residue phenylalanine 114 participates in 5-amino-6-(D-ribitylamino)uracil binding. (2S)-2-hydroxy-3-oxobutyl phosphate is bound at residue arginine 128.

It belongs to the DMRL synthase family.

It catalyses the reaction (2S)-2-hydroxy-3-oxobutyl phosphate + 5-amino-6-(D-ribitylamino)uracil = 6,7-dimethyl-8-(1-D-ribityl)lumazine + phosphate + 2 H2O + H(+). It functions in the pathway cofactor biosynthesis; riboflavin biosynthesis; riboflavin from 2-hydroxy-3-oxobutyl phosphate and 5-amino-6-(D-ribitylamino)uracil: step 1/2. Functionally, catalyzes the formation of 6,7-dimethyl-8-ribityllumazine by condensation of 5-amino-6-(D-ribitylamino)uracil with 3,4-dihydroxy-2-butanone 4-phosphate. This is the penultimate step in the biosynthesis of riboflavin. The polypeptide is 6,7-dimethyl-8-ribityllumazine synthase (Campylobacter hominis (strain ATCC BAA-381 / DSM 21671 / CCUG 45161 / LMG 19568 / NCTC 13146 / CH001A)).